The sequence spans 545 residues: Putative serine/threonine-protein kinase L673 (545 aa).

Residues 13–125 form the Cyclin N-terminal domain; it reads RLGLVNWMLN…YKVYYLTIWK (113 aa). In terms of domain architecture, Protein kinase spans 264 to 543; the sequence is IDFQNKLGSG…NCLKKIKESF (280 aa). Residues 270 to 278 and Lys291 each bind ATP; that span reads LGSGTYGSV. Residue Asp384 is the Proton acceptor of the active site.

It belongs to the protein kinase superfamily. Ser/Thr protein kinase family.

It carries out the reaction L-seryl-[protein] + ATP = O-phospho-L-seryl-[protein] + ADP + H(+). The enzyme catalyses L-threonyl-[protein] + ATP = O-phospho-L-threonyl-[protein] + ADP + H(+). The protein is Putative serine/threonine-protein kinase L673 of Acanthamoeba polyphaga (Amoeba).